The following is a 472-amino-acid chain: Sulfate adenylyltransferase subunit 1 (472 aa).

The 218-residue stretch at 22–239 (KELLRFLTCG…TVPIAGDKNY (218 aa)) folds into the tr-type G domain. The segment at 31 to 38 (GSVDDGKS) is G1. 31–38 (GSVDDGKS) is a binding site for GTP. Residues 89-93 (GITID) are G2. Residues 110-113 (DTPG) are G3. GTP-binding positions include 110 to 114 (DTPGH) and 165 to 168 (NKMD). The interval 165–168 (NKMD) is G4. The interval 202 to 204 (SAL) is G5.

The protein belongs to the TRAFAC class translation factor GTPase superfamily. Classic translation factor GTPase family. CysN/NodQ subfamily. As to quaternary structure, heterodimer composed of CysD, the smaller subunit, and CysN.

The catalysed reaction is sulfate + ATP + H(+) = adenosine 5'-phosphosulfate + diphosphate. The protein operates within sulfur metabolism; hydrogen sulfide biosynthesis; sulfite from sulfate: step 1/3. Functionally, with CysD forms the ATP sulfurylase (ATPS) that catalyzes the adenylation of sulfate producing adenosine 5'-phosphosulfate (APS) and diphosphate, the first enzymatic step in sulfur assimilation pathway. APS synthesis involves the formation of a high-energy phosphoric-sulfuric acid anhydride bond driven by GTP hydrolysis by CysN coupled to ATP hydrolysis by CysD. The chain is Sulfate adenylyltransferase subunit 1 from Cellvibrio japonicus (strain Ueda107) (Pseudomonas fluorescens subsp. cellulosa).